A 363-amino-acid polypeptide reads, in one-letter code: NAD(P)H-quinone oxidoreductase subunit 1, chloroplastic (363 aa).

A run of 6 helical transmembrane segments spans residues 30-50 (FLPI…IVWL), 104-124 (IAVI…HLVL), 129-149 (IGVF…LMSG), 248-268 (YSGI…LVSS), 300-320 (VFGT…FLFI), and 343-363 (FLLP…LLSL).

Belongs to the complex I subunit 1 family. In terms of assembly, NDH is composed of at least 16 different subunits, 5 of which are encoded in the nucleus.

Its subcellular location is the plastid. The protein resides in the chloroplast thylakoid membrane. It carries out the reaction a plastoquinone + NADH + (n+1) H(+)(in) = a plastoquinol + NAD(+) + n H(+)(out). The enzyme catalyses a plastoquinone + NADPH + (n+1) H(+)(in) = a plastoquinol + NADP(+) + n H(+)(out). NDH shuttles electrons from NAD(P)H:plastoquinone, via FMN and iron-sulfur (Fe-S) centers, to quinones in the photosynthetic chain and possibly in a chloroplast respiratory chain. The immediate electron acceptor for the enzyme in this species is believed to be plastoquinone. Couples the redox reaction to proton translocation, and thus conserves the redox energy in a proton gradient. This Eucalyptus globulus subsp. globulus (Tasmanian blue gum) protein is NAD(P)H-quinone oxidoreductase subunit 1, chloroplastic.